The chain runs to 218 residues: Thiopurine S-methyltransferase (218 aa).

S-adenosyl-L-methionine is bound by residues Trp-10, Leu-45, Glu-66, and Arg-123.

Belongs to the class I-like SAM-binding methyltransferase superfamily. TPMT family.

Its subcellular location is the cytoplasm. The catalysed reaction is S-adenosyl-L-methionine + a thiopurine = S-adenosyl-L-homocysteine + a thiopurine S-methylether.. This Shewanella sp. (strain MR-4) protein is Thiopurine S-methyltransferase.